Here is a 158-residue protein sequence, read N- to C-terminus: MENIPMTVFGAKVLEAELLKLKNVSRPRIIENIVTARAHGDLKENAEYHAAKEEQGFIEGRIKEVESKLSRMQVIDVTKLNQDGRCVFGTTITLMNIEDDSETTYKIVGEDEADIILGKISCHSPIASALMGNEEGDEVTVKAPKGDIVYEVLSVEYI.

It belongs to the GreA/GreB family.

Functionally, necessary for efficient RNA polymerase transcription elongation past template-encoded arresting sites. The arresting sites in DNA have the property of trapping a certain fraction of elongating RNA polymerases that pass through, resulting in locked ternary complexes. Cleavage of the nascent transcript by cleavage factors such as GreA or GreB allows the resumption of elongation from the new 3'terminus. GreA releases sequences of 2 to 3 nucleotides. This chain is Transcription elongation factor GreA, found in Ruthia magnifica subsp. Calyptogena magnifica.